The chain runs to 257 residues: Phosphate import ATP-binding protein PstB (257 aa).

In terms of domain architecture, ABC transporter spans 4 to 246 (LKLNDVNIYY…KKIFENPDQK (243 aa)). ATP is bound at residue 36 to 43 (GPSGCGKS).

Belongs to the ABC transporter superfamily. Phosphate importer (TC 3.A.1.7) family. As to quaternary structure, the complex is composed of two ATP-binding proteins (PstB), two transmembrane proteins (PstC and PstA) and a solute-binding protein (PstS).

The protein resides in the cell membrane. It catalyses the reaction phosphate(out) + ATP + H2O = ADP + 2 phosphate(in) + H(+). Functionally, part of the ABC transporter complex PstSACB involved in phosphate import. Responsible for energy coupling to the transport system. The polypeptide is Phosphate import ATP-binding protein PstB (Corynebacterium glutamicum (strain ATCC 13032 / DSM 20300 / JCM 1318 / BCRC 11384 / CCUG 27702 / LMG 3730 / NBRC 12168 / NCIMB 10025 / NRRL B-2784 / 534)).